Here is a 153-residue protein sequence, read N- to C-terminus: uncharacterized protein (153 aa).

This is an uncharacterized protein from Ureaplasma parvum serovar 3 (strain ATCC 700970).